Reading from the N-terminus, the 203-residue chain is Urease accessory protein UreG (203 aa).

Residue 10–17 participates in GTP binding; that stretch reads GPVGAGKT.

Belongs to the SIMIBI class G3E GTPase family. UreG subfamily. In terms of assembly, homodimer. UreD, UreF and UreG form a complex that acts as a GTP-hydrolysis-dependent molecular chaperone, activating the urease apoprotein by helping to assemble the nickel containing metallocenter of UreC. The UreE protein probably delivers the nickel.

It localises to the cytoplasm. Functionally, facilitates the functional incorporation of the urease nickel metallocenter. This process requires GTP hydrolysis, probably effectuated by UreG. The chain is Urease accessory protein UreG from Kocuria rhizophila (strain ATCC 9341 / DSM 348 / NBRC 103217 / DC2201).